The sequence spans 593 residues: Metal-response element-binding transcription factor 2 (593 aa).

The disordered stretch occupies residues 1 to 35 (MRDSTGAGNSLVHKRSPLRRNQKTPTSLTKLSLQD). Over residues 12–22 (VHKRSPLRRNQ) the composition is skewed to basic residues. Residues 23–32 (KTPTSLTKLS) are compositionally biased toward polar residues. Phosphothreonine is present on T24. The region spanning 44–101 (CKFEEGQDVLARWSDGLFYLGTIKKINILKQSCFIIFEDSSKSWVLWKDIQTGATGSG) is the Tudor domain. 2 consecutive PHD-type zinc fingers follow at residues 102–157 (EMVC…CVFA) and 201–255 (QCYC…CSSG). K360 is covalently cross-linked (Glycyl lysine isopeptide (Lys-Gly) (interchain with G-Cter in SUMO2)). Over residues 360-374 (KAEKEPEGTSHEFKI) the composition is skewed to basic and acidic residues. Disordered stretches follow at residues 360–411 (KAEK…PYTR) and 424–486 (KESI…TRTG). The segment covering 445 to 454 (TAHSSNTSDV) has biased composition (polar residues). Phosphoserine is present on S452. Low complexity predominate over residues 459–471 (ASSAKETTSSSIS). K522 is covalently cross-linked (Glycyl lysine isopeptide (Lys-Gly) (interchain with G-Cter in SUMO2)).

Belongs to the Polycomblike family. In terms of assembly, associates with the PRC2 complex, which consists of the core components EED, EZH1 or EZH2, SUZ12, and RBBP4, and various combinations of accessory subunits including AEBP2, JARID2, PHF19, MTF2 and EPOP. Forms a dimeric PRC2.1 (class 1, PRC-PCL) complex consisting of at least SUZ12, RBBP4, and PHF19 or MTF2; PHF19 and MTF2 stabilize the dimeric structure which enhances PRC2 interaction with chromatin.

The protein localises to the nucleus. Its function is as follows. Polycomb group (PcG) protein that specifically binds histone H3 trimethylated at 'Lys-36' (H3K36me3) and recruits the PRC2 complex, thus enhancing PRC2 H3K27me3 methylation activity. Regulates the transcriptional networks during embryonic stem cell self-renewal and differentiation. Promotes recruitment of the PRC2 complex to the inactive X chromosome in differentiating XX ES cells and PRC2 recruitment to target genes in undifferentiated ES cells. Required to repress Hox genes by enhancing H3K27me3 methylation of the PRC2 complex. In some conditions may act as an inhibitor of PRC2 activity: able to activate the CDKN2A gene and promote cellular senescence by suppressing the catalytic activity of the PRC2 complex locally. Binds to the metal-regulating-element (MRE) of MT1A gene promoter. The chain is Metal-response element-binding transcription factor 2 (MTF2) from Homo sapiens (Human).